A 507-amino-acid chain; its full sequence is MITLTPGHLTLPQLRKIAREPVQLTLDPASFAKIDAGAKAVADIAAKGEPAYGINTGFGRLASTHIPHDQLELLQKNLVLSHAVGVGEPMARSSVRLLMALKLSSLGRGHSGIRREVMDALITLFNADVLPLIPVKGSVGASGDLAPLAHMSAVLLGVGEVFIRGERASALDGLRVAGLAPLTLQAKEGLALLNGTQASTALALDNMFSIEDLYRTALVAGALSVDAAAGSVKPFDARIHELRGHRGQIEAAAAYRDLLDGSPINQSHRDCDKVQDPYSLRCQPQVMGACLDQMRHAADVLLIEANAVSDNPLIFPDTGEVLSGGNFHAEPVAFAADNLALAAAEIGALAERRIALLIDATLSGLPPFLVKDGGVNSGFMIAHVTAAALASENKTLAHPASVDSLPTSANQEDHVSMATFAARKLADIADNTKYILAIELLAAAQGVDLRAPYHTSPKLAPVMETIRSHVAHYELDHYFAPDIAVIAKLVGERAFAKAAPFSFASEQ.

Positions 141–143 (ASG) form a cross-link, 5-imidazolinone (Ala-Gly). Residue Ser-142 is modified to 2,3-didehydroalanine (Ser).

This sequence belongs to the PAL/histidase family. Contains an active site 4-methylidene-imidazol-5-one (MIO), which is formed autocatalytically by cyclization and dehydration of residues Ala-Ser-Gly.

It localises to the cytoplasm. It catalyses the reaction L-histidine = trans-urocanate + NH4(+). It participates in amino-acid degradation; L-histidine degradation into L-glutamate; N-formimidoyl-L-glutamate from L-histidine: step 1/3. The sequence is that of Histidine ammonia-lyase from Burkholderia ambifaria (strain MC40-6).